Reading from the N-terminus, the 324-residue chain is Annexin A10 (324 aa).

Annexin repeat units follow at residues 17–88 (FNPI…GLMY), 89–160 (PPPL…NLVQ), 171–243 (AMAA…AIVL), and 247–318 (DKPA…AICA).

This sequence belongs to the annexin family.

This Homo sapiens (Human) protein is Annexin A10 (ANXA10).